The primary structure comprises 221 residues: GTP-binding nuclear protein Ran-3 (221 aa).

The Small GTPase Ran-type domain occupies 10–174 (DYPSFKLVIV…LYLARKLAGD (165 aa)). 21–28 (DGGTGKTT) is a binding site for GTP. The segment at 40-48 (KKYEPTIGV) is switch-I. Residues Gly-71, 125–128 (NKVD), and 153–155 (SAK) contribute to the GTP site. The switch-II stretch occupies residues 71-87 (GQEKFGGLRDGYYIHGQ). Positions 201-221 (EAELAAAASQPLPDDDDDTFE) are disordered.

Belongs to the small GTPase superfamily. Ran family. Found in a nuclear export complex with RanGTP, exportin and pre-miRNA. Interacts with RanBP1a and RanBP1b. Interacts with KPNB1.

The protein resides in the nucleus. In terms of biological role, GTP-binding protein involved in nucleocytoplasmic transport. Required for the import of protein into the nucleus and also for RNA export. Involved in chromatin condensation and control of cell cycle. This is GTP-binding nuclear protein Ran-3 (RAN3) from Arabidopsis thaliana (Mouse-ear cress).